The following is a 150-amino-acid chain: D-aminoacyl-tRNA deacylase (150 aa).

The short motif at 136 to 137 (GP) is the Gly-cisPro motif, important for rejection of L-amino acids element.

It belongs to the DTD family. Homodimer.

It is found in the cytoplasm. It carries out the reaction glycyl-tRNA(Ala) + H2O = tRNA(Ala) + glycine + H(+). The catalysed reaction is a D-aminoacyl-tRNA + H2O = a tRNA + a D-alpha-amino acid + H(+). Its function is as follows. An aminoacyl-tRNA editing enzyme that deacylates mischarged D-aminoacyl-tRNAs. Also deacylates mischarged glycyl-tRNA(Ala), protecting cells against glycine mischarging by AlaRS. Acts via tRNA-based rather than protein-based catalysis; rejects L-amino acids rather than detecting D-amino acids in the active site. By recycling D-aminoacyl-tRNA to D-amino acids and free tRNA molecules, this enzyme counteracts the toxicity associated with the formation of D-aminoacyl-tRNA entities in vivo and helps enforce protein L-homochirality. The protein is D-aminoacyl-tRNA deacylase of Staphylococcus aureus (strain Mu50 / ATCC 700699).